The sequence spans 93 residues: Small ribosomal subunit protein uS19 (93 aa).

The protein belongs to the universal ribosomal protein uS19 family.

Protein S19 forms a complex with S13 that binds strongly to the 16S ribosomal RNA. This Tropheryma whipplei (strain TW08/27) (Whipple's bacillus) protein is Small ribosomal subunit protein uS19.